The following is a 382-amino-acid chain: Mannitol-1-phosphate 5-dehydrogenase (382 aa).

Residue 3 to 14 coordinates NAD(+); sequence ALHFGAGNIGRG.

This sequence belongs to the mannitol dehydrogenase family.

The catalysed reaction is D-mannitol 1-phosphate + NAD(+) = beta-D-fructose 6-phosphate + NADH + H(+). In Klebsiella pneumoniae, this protein is Mannitol-1-phosphate 5-dehydrogenase (mtlD).